A 580-amino-acid polypeptide reads, in one-letter code: MNLFTEIRTLVTAELGAMTEAGDLPAGLDLSAVAVEPPRDPAHGDMSTNAAMVLAKPSGKPPRAIAEALATRLAADPRISSAEVAGPGFLNLRLRPAVWQGMVATILQAGDTYGRSTIGAGQKVNVEFVSANPTGPMHVGHVRGAVVGDALARLLAYAGWNVTREYYINDGGAQVDVLARSAFERYREAHGLEPEIREGLYPGDYLIPVGEALKAKYGDSLLDKGEQHWLKEVREFATEMMMQMIREDLAALGVEMDVYSSEKALYGTGKIEAALDRLKEMDLIYEGVLEPPKGKTPEDWEPREQTLFRSTAHGDDVDRPVKKSDGSWTYFAPDIAYHYDKVTRGFDQLIDIFGADHGGYVKRMKAAVAALSAGRVPLDIKLIQLVKLWKNGEPFKMSKRAGTYVTLRDVVEQVGTDVTRFVMLTRKNDATLDFDFDKVLEQSKENPVFYVQYANARINSVLRKAREQGMDVSDATLATADLDRLDHPAEIALIAKLAEWPRLVEIAARTNEPHRVAFYLHELASELHGLWNRGNDEAGLRFLQDDPVVSQAKIALARAVGVVICAGLGILGVTPVEEMR.

The 'HIGH' region signature appears at 131–141; it reads ANPTGPMHVGH.

Belongs to the class-I aminoacyl-tRNA synthetase family. In terms of assembly, monomer.

The protein resides in the cytoplasm. It carries out the reaction tRNA(Arg) + L-arginine + ATP = L-arginyl-tRNA(Arg) + AMP + diphosphate. The protein is Arginine--tRNA ligase of Cereibacter sphaeroides (strain ATCC 17029 / ATH 2.4.9) (Rhodobacter sphaeroides).